We begin with the raw amino-acid sequence, 158 residues long: Trafficking protein particle complex subunit 6B (158 aa).

The protein belongs to the TRAPP small subunits family. BET3 subfamily. Homodimer. Part of a TRAPP complex. Heterodimer with TRAPPC3. The heterodimer TRAPPC6B-TRAPPC3 interacts with TRAPPC1 likely providing a core for TRAPP complex formation. As to expression, widely expressed. Expressed in lung, heart, liver, spleen, brain and kidney.

The protein localises to the golgi apparatus. Its subcellular location is the cis-Golgi network. It localises to the endoplasmic reticulum. Its function is as follows. Component of a transport protein particle (TRAPP) complex that may function in specific stages of inter-organelle traffic. Specifically involved in the early development of neural circuitry, likely by controlling the frequency and amplitude of intracellular calcium transients implicated in the regulation of neuron differentiation and survival. In Mus musculus (Mouse), this protein is Trafficking protein particle complex subunit 6B.